Consider the following 2139-residue polypeptide: U5 small nuclear ribonucleoprotein 200 kDa helicase (2139 aa).

Phosphoserine occurs at positions 17 and 26. Positions 39 to 80 (EVLSLVGKLEGTRMGDKAQRTKPQMQEERRAKRRKRDEDRHD) are disordered. Lysine 46 participates in a covalent cross-link: Glycyl lysine isopeptide (Lys-Gly) (interchain with G-Cter in SUMO2). Basic and acidic residues predominate over residues 48–80 (EGTRMGDKAQRTKPQMQEERRAKRRKRDEDRHD). Positions 54 to 84 (DKAQRTKPQMQEERRAKRRKRDEDRHDINKM) form a coiled coil. Serine 225 is subject to Phosphoserine. Residue threonine 389 is modified to Phosphothreonine. The interval 395–2132 (DLDQGGEALA…YKFSVDVKEA (1738 aa)) is interaction with C9orf78 and WBP4. The Helicase ATP-binding 1 domain maps to 490–673 (RAALETDENL…FLRVDPAKGL (184 aa)). Position 503-510 (503-510 (APTGAGKT)) interacts with ATP. The short motif at 615-618 (DEIH) is the DEAH box element. The region spanning 684 to 921 (PLEQTYVGIT…NAKDAVNWLG (238 aa)) is the Helicase C-terminal 1 domain. Phosphotyrosine is present on tyrosine 709. A Glycyl lysine isopeptide (Lys-Gly) (interchain with G-Cter in SUMO) cross-link involves residue lysine 944. An N6-acetyllysine; alternate modification is found at lysine 971. Lysine 971 is covalently cross-linked (Glycyl lysine isopeptide (Lys-Gly) (interchain with G-Cter in SUMO); alternate). One can recognise an SEC63 1 domain in the interval 982–1289 (TELGRIASHY…SCETQLPVSF (308 aa)). Residues lysine 1071 and lysine 1199 each participate in a glycyl lysine isopeptide (Lys-Gly) (interchain with G-Cter in SUMO) cross-link. The tract at residues 1285–2139 (LPVSFRHLIL…KEAETDSDSD (855 aa)) is interaction with TSSC4. The 176-residue stretch at 1340-1515 (NTVYNSDDNV…WLGCSATSTF (176 aa)) folds into the Helicase ATP-binding 2 domain. ATP is bound at residue 1353 to 1360 (APTGSGKT). Threonine 1431 is subject to Phosphothreonine. A DEAH box motif is present at residues 1457-1460 (DEVH). The 209-residue stretch at 1548 to 1756 (PVYHAITKHS…TIENKQDAVD (209 aa)) folds into the Helicase C-terminal 2 domain. At threonine 1768 the chain carries Phosphothreonine. The region spanning 1815–2127 (PLNLGMIAAY…GCDQEYKFSV (313 aa)) is the SEC63 2 domain. Serine 2005 carries the post-translational modification Phosphoserine. A Glycyl lysine isopeptide (Lys-Gly) (interchain with G-Cter in SUMO) cross-link involves residue lysine 2094. Threonine 2134 carries the phosphothreonine modification. Phosphoserine is present on residues serine 2136 and serine 2138.

This sequence belongs to the helicase family. SKI2 subfamily. As to quaternary structure, component of a core complex containing at least PRPF8, SNRNP200, EFTUD2 and SNRNP40. Component of the U5 snRNP and U4/U6-U5 tri-snRNP complexes, building blocks of the spliceosome. Component of the U4/U6-U5 tri-snRNP complex composed of the U4, U6 and U5 snRNAs and at least PRPF3, PRPF4, PRPF6, PRPF8, PRPF31, SNRNP200, TXNL4A, SNRNP40, DDX23, CD2BP2, PPIH, SNU13, EFTUD2, SART1 and USP39. Component of precatalytic, catalytic and postcatalytic spliceosomal complexes. Component of the minor spliceosome, which splices U12-type introns. Interacts with C9orf78; the interaction is direct and mutually exclusive with its interaction with WBP4. Interacts with WBP4; the interaction is mutually exclusive with its interaction with C9orf78. Interacts with PRPF8. Interacts with TSSC4; the interaction is direct, excludes recruitment of C9ORF78 and WBP4 to SNRNP200 and negatively regulates its RNA helicase activity.

The protein resides in the nucleus. It carries out the reaction ATP + H2O = ADP + phosphate + H(+). Catalyzes the ATP-dependent unwinding of U4/U6 RNA duplices, an essential step in the assembly of a catalytically active spliceosome. Plays a role in pre-mRNA splicing as core component of precatalytic, catalytic and postcatalytic spliceosomal complexes. As a component of the minor spliceosome, involved in the splicing of U12-type introns in pre-mRNAs. Involved in spliceosome assembly, activation and disassembly. Mediates changes in the dynamic network of RNA-RNA interactions in the spliceosome. The sequence is that of U5 small nuclear ribonucleoprotein 200 kDa helicase (Snrnp200) from Rattus norvegicus (Rat).